We begin with the raw amino-acid sequence, 497 residues long: Guanosine-5'-triphosphate,3'-diphosphate pyrophosphatase (497 aa).

Belongs to the GppA/Ppx family. GppA subfamily.

The enzyme catalyses guanosine 3'-diphosphate 5'-triphosphate + H2O = guanosine 3',5'-bis(diphosphate) + phosphate + H(+). The protein operates within purine metabolism; ppGpp biosynthesis; ppGpp from GTP: step 2/2. Its function is as follows. Catalyzes the conversion of pppGpp to ppGpp. Guanosine pentaphosphate (pppGpp) is a cytoplasmic signaling molecule which together with ppGpp controls the 'stringent response', an adaptive process that allows bacteria to respond to amino acid starvation, resulting in the coordinated regulation of numerous cellular activities. The protein is Guanosine-5'-triphosphate,3'-diphosphate pyrophosphatase of Vibrio vulnificus (strain YJ016).